Here is a 715-residue protein sequence, read N- to C-terminus: Polyribonucleotide nucleotidyltransferase (715 aa).

2 residues coordinate Mg(2+): aspartate 488 and aspartate 494. Residues 555 to 614 (PRIEVMHIPTDKIRDVIGTGGKVIREIVEKTGAKINIEDDGTVKIASSNGKEIEAARKWI) form the KH domain. The 69-residue stretch at 624–692 (GEIYEGTVVK…ERGKVRLSMK (69 aa)) folds into the S1 motif domain.

Belongs to the polyribonucleotide nucleotidyltransferase family. It depends on Mg(2+) as a cofactor.

The protein localises to the cytoplasm. It catalyses the reaction RNA(n+1) + phosphate = RNA(n) + a ribonucleoside 5'-diphosphate. In terms of biological role, involved in mRNA degradation. Catalyzes the phosphorolysis of single-stranded polyribonucleotides processively in the 3'- to 5'-direction. The polypeptide is Polyribonucleotide nucleotidyltransferase (Chelativorans sp. (strain BNC1)).